Reading from the N-terminus, the 503-residue chain is Maturase K (503 aa).

It belongs to the intron maturase 2 family. MatK subfamily.

It localises to the plastid. The protein resides in the chloroplast. Usually encoded in the trnK tRNA gene intron. Probably assists in splicing its own and other chloroplast group II introns. In Purshia tridentata (Antelope bitterbrush), this protein is Maturase K.